The chain runs to 303 residues: Nucleotide-binding protein Dvul_1502 (303 aa).

23 to 30 contacts ATP; that stretch reads GLSGAGKS. Residue 75–78 coordinates GTP; it reads DLRE.

Belongs to the RapZ-like family.

Its function is as follows. Displays ATPase and GTPase activities. In Nitratidesulfovibrio vulgaris (strain DP4) (Desulfovibrio vulgaris), this protein is Nucleotide-binding protein Dvul_1502.